Here is a 415-residue protein sequence, read N- to C-terminus: Serine hydroxymethyltransferase (415 aa).

(6S)-5,6,7,8-tetrahydrofolate-binding positions include Leu119 and 123–125 (GHL). At Lys228 the chain carries N6-(pyridoxal phosphate)lysine. Residue 353 to 355 (SAF) coordinates (6S)-5,6,7,8-tetrahydrofolate.

Belongs to the SHMT family. Homodimer. The cofactor is pyridoxal 5'-phosphate.

The protein localises to the cytoplasm. It catalyses the reaction (6R)-5,10-methylene-5,6,7,8-tetrahydrofolate + glycine + H2O = (6S)-5,6,7,8-tetrahydrofolate + L-serine. It functions in the pathway one-carbon metabolism; tetrahydrofolate interconversion. It participates in amino-acid biosynthesis; glycine biosynthesis; glycine from L-serine: step 1/1. Functionally, catalyzes the reversible interconversion of serine and glycine with tetrahydrofolate (THF) serving as the one-carbon carrier. Also exhibits THF-independent aldolase activity toward beta-hydroxyamino acids, producing glycine and aldehydes, via a retro-aldol mechanism. The sequence is that of Serine hydroxymethyltransferase from Halobacterium salinarum (strain ATCC 29341 / DSM 671 / R1).